We begin with the raw amino-acid sequence, 781 residues long: Chloride channel protein CLC-f (781 aa).

Disordered regions lie at residues 1 to 41 and 79 to 98; these read MSSG…QSPA and RERH…EEDG. The segment covering 10 to 20 has biased composition (basic and acidic residues); sequence NEDRHLLRSTD. 12 consecutive transmembrane segments (helical) span residues 129-149, 184-204, 221-241, 250-270, 279-299, 314-334, 350-370, 388-408, 433-453, 457-477, 502-522, and 523-543; these read WALL…VAGF, ILLI…LLEI, FLAG…LGTG, SVDI…NNRE, GAAS…FFAI, FTTA…NALL, AAEL…SVVF, FGLP…IIAL, APGI…TALC, GLVG…GAVF, ALVG…TSVL, and LLFE…AVGL. The disordered stretch occupies residues 553 to 584; it reads QGKESDSSEGRSTGRGYSSLSPSERKTEGVWR. The span at 575 to 584 shows a compositional bias: basic and acidic residues; that stretch reads SERKTEGVWR. CBS domains lie at 621 to 677 and 699 to 763; these read MSKN…NAST and QERG…EMSR. Residues 726–746 traverse the membrane as a helical segment; the sequence is QLPVVKRGEVIHKGKRRKLLG.

The protein belongs to the chloride channel (TC 2.A.49) family. As to quaternary structure, homodimer.

It is found in the membrane. Functionally, voltage-gated chloride channel. The sequence is that of Chloride channel protein CLC-f (CLC-F) from Arabidopsis thaliana (Mouse-ear cress).